A 310-amino-acid chain; its full sequence is Putative S-adenosyl-L-methionine-dependent methyltransferase Mb0151 (310 aa).

S-adenosyl-L-methionine is bound by residues Asp132 and 161 to 162 (DL).

It belongs to the UPF0677 family.

Exhibits S-adenosyl-L-methionine-dependent methyltransferase activity. This is Putative S-adenosyl-L-methionine-dependent methyltransferase Mb0151 from Mycobacterium bovis (strain ATCC BAA-935 / AF2122/97).